A 371-amino-acid polypeptide reads, in one-letter code: MPSNPTRKGRVVVGMSGGVDSSVTAWLLKQQGYEVVGLFMKNWEDDDDSEYCSTRQDLLDAASVADLVGVEFEYVNFAAEYKDRVFAEFLREYSAGRTPNPDVLCNAEIKFKAFLDHAMALGAEHIATGHYARVRTVETPAGPRHQLLKALDDTKDQSYFLHRLNQVQLARTLFPLGELRKTEVRRIAHEIGLHNAAKKDSTGICFIGERPFREFLNRYLPSEPGPILTPEGQRVGTHHGLSFYTLGQRKGLGVGGVKGRQRDDGTAEAWYAARKDLARNVLYVVQGHDHPWLLSAQLQAQDASWIAGEPPAAGAYGAKTRYRQADAACRLDQAGGERFALAFEQAQWAVTPGQSAVLYDGEVCLGGGIII.

Residues 14–21 (GMSGGVDS) and Met-40 contribute to the ATP site. Residues 100–102 (NPD) form an interaction with target base in tRNA region. Residue Cys-105 is the Nucleophile of the active site. Residues Cys-105 and Cys-205 are joined by a disulfide bond. Gly-129 serves as a coordination point for ATP. Positions 155–157 (KDQ) are interaction with tRNA. Cys-205 serves as the catalytic Cysteine persulfide intermediate. Positions 321–322 (RY) are interaction with tRNA.

The protein belongs to the MnmA/TRMU family.

The protein localises to the cytoplasm. The catalysed reaction is S-sulfanyl-L-cysteinyl-[protein] + uridine(34) in tRNA + AH2 + ATP = 2-thiouridine(34) in tRNA + L-cysteinyl-[protein] + A + AMP + diphosphate + H(+). In terms of biological role, catalyzes the 2-thiolation of uridine at the wobble position (U34) of tRNA, leading to the formation of s(2)U34. This chain is tRNA-specific 2-thiouridylase MnmA, found in Bordetella pertussis (strain Tohama I / ATCC BAA-589 / NCTC 13251).